The sequence spans 132 residues: Small ribosomal subunit protein uS8 (132 aa).

This sequence belongs to the universal ribosomal protein uS8 family. Part of the 30S ribosomal subunit. Contacts proteins S5 and S12.

Functionally, one of the primary rRNA binding proteins, it binds directly to 16S rRNA central domain where it helps coordinate assembly of the platform of the 30S subunit. This chain is Small ribosomal subunit protein uS8, found in Bifidobacterium animalis subsp. lactis (strain AD011).